The chain runs to 139 residues: Transcription antitermination protein NusB (139 aa).

This sequence belongs to the NusB family.

Its function is as follows. Involved in transcription antitermination. Required for transcription of ribosomal RNA (rRNA) genes. Binds specifically to the boxA antiterminator sequence of the ribosomal RNA (rrn) operons. In Rubrobacter xylanophilus (strain DSM 9941 / JCM 11954 / NBRC 16129 / PRD-1), this protein is Transcription antitermination protein NusB.